Consider the following 446-residue polypeptide: Probable glucuronosyltransferase Os04g0650300 (446 aa).

Residues 1–30 are Cytoplasmic-facing; that stretch reads MKLPLLRPLWPMLSPAAGSPDSPPEPSKPS. Residues 31-51 form a helical; Signal-anchor for type II membrane protein membrane-spanning segment; the sequence is LPAAWLLLHALFCATSMAVGF. The Lumenal portion of the chain corresponds to 52 to 446; that stretch reads RFSRLIVYLL…TTLLNTEGQH (395 aa). Residue Asn87 is glycosylated (N-linked (GlcNAc...) asparagine). Positions 425–446 are disordered; sequence QQDAKPETPLKRTTLLNTEGQH.

The protein belongs to the glycosyltransferase 43 family.

Its subcellular location is the golgi apparatus membrane. In terms of biological role, involved in the synthesis of glucuronoxylan hemicellulose in secondary cell walls. The polypeptide is Probable glucuronosyltransferase Os04g0650300 (Oryza sativa subsp. japonica (Rice)).